The primary structure comprises 336 residues: tRNA N6-adenosine threonylcarbamoyltransferase (336 aa).

Fe cation contacts are provided by His-114 and His-118. Substrate-binding positions include 136 to 140 (LVSGG), Asp-169, Gly-182, Asp-186, and Asn-275. Asp-301 lines the Fe cation pocket.

This sequence belongs to the KAE1 / TsaD family. Fe(2+) serves as cofactor.

The protein resides in the cytoplasm. The catalysed reaction is L-threonylcarbamoyladenylate + adenosine(37) in tRNA = N(6)-L-threonylcarbamoyladenosine(37) in tRNA + AMP + H(+). Functionally, required for the formation of a threonylcarbamoyl group on adenosine at position 37 (t(6)A37) in tRNAs that read codons beginning with adenine. Is involved in the transfer of the threonylcarbamoyl moiety of threonylcarbamoyl-AMP (TC-AMP) to the N6 group of A37, together with TsaE and TsaB. TsaD likely plays a direct catalytic role in this reaction. The protein is tRNA N6-adenosine threonylcarbamoyltransferase of Streptococcus pneumoniae (strain CGSP14).